Reading from the N-terminus, the 255-residue chain is Wtf element wtf15 (255 aa).

The segment at 19–78 is disordered; that stretch reads KAGHEIDLEGSPPSEHNSEEKSTLPSNSDILTSANPVSQASETPDHSIESNTGSTQSPTS. Polar residues-rich tracts occupy residues 41-60 and 67-78; these read TLPS…QASE and ESNTGSTQSPTS. 4 consecutive transmembrane segments (helical) span residues 85-105, 112-132, 162-182, and 187-208; these read FSFC…CVLP, FLIA…SGSI, FLKT…LVLL, and WGWK…SFCL.

The protein belongs to the WTF family.

The protein localises to the spore membrane. May act in meiotic drive. This Schizosaccharomyces pombe (strain 972 / ATCC 24843) (Fission yeast) protein is Wtf element wtf15.